The sequence spans 228 residues: Endonuclease V (228 aa).

Residues D43 and D109 each coordinate Mg(2+).

The protein belongs to the endonuclease V family. Requires Mg(2+) as cofactor.

The protein resides in the cytoplasm. The catalysed reaction is Endonucleolytic cleavage at apurinic or apyrimidinic sites to products with a 5'-phosphate.. DNA repair enzyme involved in the repair of deaminated bases. Selectively cleaves double-stranded DNA at the second phosphodiester bond 3' to a deoxyinosine leaving behind the intact lesion on the nicked DNA. The chain is Endonuclease V from Dictyoglomus thermophilum (strain ATCC 35947 / DSM 3960 / H-6-12).